The sequence spans 329 residues: Basic leucine zipper 61 (329 aa).

Disordered stretches follow at residues 1-22 and 98-204; these read MAQL…FSSQ and DDVH…HDPK. Positions 10 to 22 are enriched in polar residues; the sequence is TMTTPNWPDFSSQ. Positions 119–133 are enriched in low complexity; sequence PTRSSSNTSTPSDHN. Over residues 139 to 154 the composition is skewed to basic and acidic residues; it reads DNNKEAPPSDHDHHMD. A compositionally biased stretch (low complexity) spans 155–169; it reads NNVANQNNAAGNNYN. One can recognise a bZIP domain in the interval 202–254; that stretch reads DPKRVKRILANRQSAQRSRVRKLQYISELERSVTSLQTEVSVLSPRVAFLDHQ. The segment at 204–223 is basic motif; it reads KRVKRILANRQSAQRSRVRK. Positions 230–251 are leucine-zipper; the sequence is LERSVTSLQTEVSVLSPRVAFL. Over residues 304–313 the composition is skewed to polar residues; sequence KMENNVSDQS. The segment at 304–329 is disordered; it reads KMENNVSDQSPADIKPSVEKEQLLNV. A compositionally biased stretch (basic and acidic residues) spans 319–329; sequence PSVEKEQLLNV.

Forms heterodimers with BZIP18, BZIP43 and VIP1/BZIP51.

The protein localises to the nucleus. Functionally, transcriptional activator. The protein is Basic leucine zipper 61 of Arabidopsis thaliana (Mouse-ear cress).